The following is a 411-amino-acid chain: LL-diaminopimelate aminotransferase (411 aa).

Positions 15 and 42 each coordinate substrate. Pyridoxal 5'-phosphate contacts are provided by residues Tyr-72, 108–109, Tyr-132, Asn-187, Tyr-218, and 246–248; these read AK and SFS. The substrate site is built by Lys-109, Tyr-132, and Asn-187. An N6-(pyridoxal phosphate)lysine modification is found at Lys-249. Residues Arg-257 and Asn-292 each coordinate pyridoxal 5'-phosphate. The substrate site is built by Asn-292 and Arg-388.

The protein belongs to the class-I pyridoxal-phosphate-dependent aminotransferase family. LL-diaminopimelate aminotransferase subfamily. In terms of assembly, homodimer. The cofactor is pyridoxal 5'-phosphate.

The enzyme catalyses (2S,6S)-2,6-diaminopimelate + 2-oxoglutarate = (S)-2,3,4,5-tetrahydrodipicolinate + L-glutamate + H2O + H(+). The protein operates within amino-acid biosynthesis; L-lysine biosynthesis via DAP pathway; LL-2,6-diaminopimelate from (S)-tetrahydrodipicolinate (aminotransferase route): step 1/1. Functionally, involved in the synthesis of meso-diaminopimelate (m-DAP or DL-DAP), required for both lysine and peptidoglycan biosynthesis. Catalyzes the direct conversion of tetrahydrodipicolinate to LL-diaminopimelate. The sequence is that of LL-diaminopimelate aminotransferase from Rippkaea orientalis (strain PCC 8801 / RF-1) (Cyanothece sp. (strain PCC 8801)).